We begin with the raw amino-acid sequence, 354 residues long: GTPase Obg (354 aa).

One can recognise an Obg domain in the interval 1-159 (MKFVDEVKIH…RDLVLELKLL (159 aa)). In terms of domain architecture, OBG-type G spans 160–333 (ADVGIVGYPN…LLDAVGRALF (174 aa)). Residues 166–173 (GYPNAGKS), 191–195 (FTTLT), 212–215 (DIPG), 283–286 (TKID), and 314–316 (SAV) contribute to the GTP site. The Mg(2+) site is built by Ser-173 and Thr-193.

Belongs to the TRAFAC class OBG-HflX-like GTPase superfamily. OBG GTPase family. In terms of assembly, monomer. The cofactor is Mg(2+).

Its subcellular location is the cytoplasm. In terms of biological role, an essential GTPase which binds GTP, GDP and possibly (p)ppGpp with moderate affinity, with high nucleotide exchange rates and a fairly low GTP hydrolysis rate. Plays a role in control of the cell cycle, stress response, ribosome biogenesis and in those bacteria that undergo differentiation, in morphogenesis control. The chain is GTPase Obg from Anaeromyxobacter sp. (strain K).